A 341-amino-acid chain; its full sequence is Cell division protein ZipA (341 aa).

The Periplasmic portion of the chain corresponds to 1–6; the sequence is MENLQL. A helical transmembrane segment spans residues 7–27; sequence VLFVLGAIAIVAVLVHGFWSI. Residues 28 to 341 are Cytoplasmic-facing; sequence RKQQPKSLKE…YLQRIRTQNS (314 aa). 2 disordered regions span residues 35–134 and 157–201; these read LKES…PVLS and QSSL…PEPE. Polar residues predominate over residues 90-100; that stretch reads TLTSEGQMDSS. Positions 175 to 190 are enriched in low complexity; it reads SIEVPEPVSEPVLESV. Pro residues predominate over residues 192–201; the sequence is EPEPVAPEPE.

This sequence belongs to the ZipA family. Interacts with FtsZ via their C-terminal domains.

It localises to the cell inner membrane. Essential cell division protein that stabilizes the FtsZ protofilaments by cross-linking them and that serves as a cytoplasmic membrane anchor for the Z ring. Also required for the recruitment to the septal ring of downstream cell division proteins. This Shewanella sediminis (strain HAW-EB3) protein is Cell division protein ZipA.